A 195-amino-acid polypeptide reads, in one-letter code: Putative NADH dehydrogenase/NAD(P)H nitroreductase RSc1004 (195 aa).

It belongs to the nitroreductase family. HadB/RutE subfamily. FMN is required as a cofactor.

The chain is Putative NADH dehydrogenase/NAD(P)H nitroreductase RSc1004 from Ralstonia nicotianae (strain ATCC BAA-1114 / GMI1000) (Ralstonia solanacearum).